Here is a 125-residue protein sequence, read N- to C-terminus: Putative iron-sulfur cluster insertion protein ErpA 2 (125 aa).

Residues cysteine 53, cysteine 117, and cysteine 119 each coordinate iron-sulfur cluster.

Belongs to the HesB/IscA family. As to quaternary structure, homodimer. It depends on iron-sulfur cluster as a cofactor.

Required for insertion of 4Fe-4S clusters. This is Putative iron-sulfur cluster insertion protein ErpA 2 from Polaromonas naphthalenivorans (strain CJ2).